We begin with the raw amino-acid sequence, 660 residues long: Epithelial sodium channel subunit gamma (660 aa).

The Cytoplasmic portion of the chain corresponds to Met1–Trp55. The helical transmembrane segment at Ile56 to Leu76 threads the bilayer. Over Met77–Gln537 the chain is Extracellular. 8 cysteine pairs are disulfide-bonded: Cys101–Cys286, Cys209–Cys217, Cys263–Cys270, Cys375–Cys460, Cys397–Cys456, Cys401–Cys452, Cys410–Cys437, and Cys412–Cys426. A helical membrane pass occupies residues Leu538–Ile558. The Cytoplasmic segment spans residues Asp559–Leu660.

This sequence belongs to the amiloride-sensitive sodium channel (TC 1.A.6) family. SCNN1G subfamily. As to quaternary structure, component of the heterotrimeric epithelial sodium channel (ENaC) composed of an alpha/SCNN1A, a beta/SCNN1B and a gamma/SCNN1G subunit.

The protein resides in the apical cell membrane. It carries out the reaction Na(+)(in) = Na(+)(out). Originally identified and characterized by its inhibition by the diuretic drug amiloride. Its function is as follows. This is one of the three pore-forming subunits of the heterotrimeric epithelial sodium channel (ENaC), a critical regulator of sodium balance and fluid homeostasis. ENaC operates in epithelial tissues, where it mediates the electrodiffusion of sodium ions from extracellular fluid through the apical membrane of cells, with water following osmotically. This is Epithelial sodium channel subunit gamma (scnn1g-a) from Xenopus laevis (African clawed frog).